We begin with the raw amino-acid sequence, 116 residues long: uncharacterized protein (116 aa).

Residues 97 to 116 are disordered; sequence AKGKGNEGREEAEEASGKSK. Positions 100–116 are enriched in basic and acidic residues; that stretch reads KGNEGREEAEEASGKSK.

The protein belongs to the UPF0440 family.

This is an uncharacterized protein from Pyrococcus horikoshii (strain ATCC 700860 / DSM 12428 / JCM 9974 / NBRC 100139 / OT-3).